Consider the following 215-residue polypeptide: Ribosomal RNA small subunit methyltransferase G (215 aa).

Residues G78, L83, 128-129, and R146 each bind S-adenosyl-L-methionine; that span reads AE.

The protein belongs to the methyltransferase superfamily. RNA methyltransferase RsmG family.

The protein localises to the cytoplasm. It catalyses the reaction guanosine(527) in 16S rRNA + S-adenosyl-L-methionine = N(7)-methylguanosine(527) in 16S rRNA + S-adenosyl-L-homocysteine. Specifically methylates the N7 position of guanine in position 527 of 16S rRNA. The polypeptide is Ribosomal RNA small subunit methyltransferase G (Anaeromyxobacter sp. (strain Fw109-5)).